The sequence spans 291 residues: NAD kinase (291 aa).

Aspartate 73 functions as the Proton acceptor in the catalytic mechanism. Residues 73–74, 147–148, arginine 175, aspartate 177, and glutamine 246 contribute to the NAD(+) site; these read DG and ND.

The protein belongs to the NAD kinase family. The cofactor is a divalent metal cation.

The protein localises to the cytoplasm. It carries out the reaction NAD(+) + ATP = ADP + NADP(+) + H(+). Involved in the regulation of the intracellular balance of NAD and NADP, and is a key enzyme in the biosynthesis of NADP. Catalyzes specifically the phosphorylation on 2'-hydroxyl of the adenosine moiety of NAD to yield NADP. The sequence is that of NAD kinase from Laribacter hongkongensis (strain HLHK9).